Reading from the N-terminus, the 31-residue chain is Basic phospholipase A2 13 (31 aa).

This sequence belongs to the phospholipase A2 family. Group I subfamily. Ca(2+) serves as cofactor. As to expression, expressed by the venom gland.

Its subcellular location is the secreted. It carries out the reaction a 1,2-diacyl-sn-glycero-3-phosphocholine + H2O = a 1-acyl-sn-glycero-3-phosphocholine + a fatty acid + H(+). Snake venom phospholipase A2 (PLA2) that inhibits neuromuscular transmission by blocking acetylcholine release from the nerve termini. PLA2 catalyzes the calcium-dependent hydrolysis of the 2-acyl groups in 3-sn-phosphoglycerides. This Bungarus fasciatus (Banded krait) protein is Basic phospholipase A2 13.